The primary structure comprises 361 residues: MKTILAAYSGVKKGSGSSILSALHDLPTVPWLTRSKMVKHLQVISVLQFIMTFLTMGIACSLLLMYMFCTDFWVISVLYVAWLIYDWNTPGQGGRRSTWVRDWTVWKYMRDYFPIRLIKTHNLLPSRNYIFGYHPHGILCFGAFCNFGTEATGFTKVFPGIKPSLATLAGNFRLPMFREYLMCGGICPVNRNSIDYLLSSNGTGNAVVIVIGGAAESLDCAPGRNSVMLKKRKGFVKLALKQGADLVPVYSFGENEVYKQLIFEEGSWWRTIQRKLQKFLGFAPCLFHGCGLFFPESWGLVPYCKPITTVVGEPITVPKIEEPTQDVIDMYHAMYIRSLKSLFDNYKTRFGLNESDTLIIH.

Residues 1 to 42 (MKTILAAYSGVKKGSGSSILSALHDLPTVPWLTRSKMVKHLQ) lie on the Cytoplasmic side of the membrane. Residues 43–61 (VISVLQFIMTFLTMGIACS) form a helical membrane-spanning segment. The Lumenal portion of the chain corresponds to 62-65 (LLLM). A helical membrane pass occupies residues 66–85 (YMFCTDFWVISVLYVAWLIY). Over 86–361 (DWNTPGQGGR…LNESDTLIIH (276 aa)) the chain is Cytoplasmic.

It belongs to the diacylglycerol acyltransferase family.

It is found in the endoplasmic reticulum membrane. Its subcellular location is the lipid droplet. It localises to the cytoplasm. The protein resides in the perinuclear region. It catalyses the reaction an acyl-CoA + a 1,2-diacyl-sn-glycerol = a triacyl-sn-glycerol + CoA. The enzyme catalyses all-trans-retinol + an acyl-CoA = an all-trans-retinyl ester + CoA. The catalysed reaction is 2-(9Z-octadecenoyl)-glycerol + (9Z)-octadecenoyl-CoA = 1,2-di-(9Z-octadecenoyl)-sn-glycerol + CoA. It carries out the reaction 1,2-di-(9Z-octadecenoyl)-sn-glycerol + (9Z)-octadecenoyl-CoA = 1,2,3-tri-(9Z-octadecenoyl)-glycerol + CoA. It catalyses the reaction all-trans-retinol + hexadecanoyl-CoA = all-trans-retinyl hexadecanoate + CoA. The enzyme catalyses 1-O-(9Z-octadecenyl)-glycerol + (9Z)-octadecenoyl-CoA = 1-O-(9Z-octadecyl)-3-(9Z-octadecenoyl)-glycerol + CoA. The catalysed reaction is 1-(9Z-octadecenoyl)-glycerol + (9Z)-octadecenoyl-CoA = 1,2-di-(9Z-octadecenoyl)-glycerol + CoA. It carries out the reaction 1,2-di-(9Z-octadecenoyl)-sn-glycerol + hexadecanoyl-CoA = 1,2-di-(9Z)-octadecenoyl-3-hexadecanoyl-sn-glycerol + CoA. It catalyses the reaction 1,3-di-(9Z-octadecenoyl)-glycerol + (9Z)-octadecenoyl-CoA = 1,2,3-tri-(9Z-octadecenoyl)-glycerol + CoA. The enzyme catalyses 2,3-di-(9Z)-octadecenoyl-sn-glycerol + (9Z)-octadecenoyl-CoA = 1,2,3-tri-(9Z-octadecenoyl)-glycerol + CoA. The catalysed reaction is 2-(9Z-octadecenoyl)-glycerol + hexadecanoyl-CoA = 1-hexadecanoyl-2-(9Z-octadecenoyl)-sn-glycerol + CoA. It functions in the pathway glycerolipid metabolism; triacylglycerol biosynthesis. Its function is as follows. Essential acyltransferase that catalyzes the terminal and only committed step in triacylglycerol synthesis by using diacylglycerol and fatty acyl CoA as substrates. Required for synthesis and storage of intracellular triglycerides. Probably plays a central role in cytosolic lipid accumulation. This chain is Diacylglycerol O-acyltransferase 2 (dgat2), found in Danio rerio (Zebrafish).